The following is a 485-amino-acid chain: Glutamyl-tRNA(Gln) amidotransferase subunit A (485 aa).

Active-site charge relay system residues include K79 and S154. S178 acts as the Acyl-ester intermediate in catalysis.

Belongs to the amidase family. GatA subfamily. As to quaternary structure, heterotrimer of A, B and C subunits.

The catalysed reaction is L-glutamyl-tRNA(Gln) + L-glutamine + ATP + H2O = L-glutaminyl-tRNA(Gln) + L-glutamate + ADP + phosphate + H(+). Functionally, allows the formation of correctly charged Gln-tRNA(Gln) through the transamidation of misacylated Glu-tRNA(Gln) in organisms which lack glutaminyl-tRNA synthetase. The reaction takes place in the presence of glutamine and ATP through an activated gamma-phospho-Glu-tRNA(Gln). The sequence is that of Glutamyl-tRNA(Gln) amidotransferase subunit A from Bacillus licheniformis (strain ATCC 14580 / DSM 13 / JCM 2505 / CCUG 7422 / NBRC 12200 / NCIMB 9375 / NCTC 10341 / NRRL NRS-1264 / Gibson 46).